A 367-amino-acid polypeptide reads, in one-letter code: Cystinosin (367 aa).

Residues 1–22 (MIRNWLTIFILFPLKLVEKCES) form the signal peptide. Topologically, residues 23–125 (SVSLTVPPVV…LVIRSSAISI (103 aa)) are lumenal. Residues Asn36, Asn41, and Asn51 are each glycosylated (N-linked (GlcNAc...) (high mannose) asparagine). Asn66 carries an N-linked (GlcNAc...) asparagine glycan. N-linked (GlcNAc...) (high mannose) asparagine glycans are attached at residues Asn84, Asn104, and Asn107. The PQ-loop 1 domain maps to 123 to 189 (ISIINQVIGW…LLWVPYIKEQ (67 aa)). Residues 126–150 (INQVIGWIYFVAWSISFYPQVIMNW) traverse the membrane as a helical segment. At 151 to 159 (RRKSVIGLS) the chain is on the cytoplasmic side. A helical membrane pass occupies residues 160–179 (FDFVALNLTGFVAYSVFNIG). Asn166 lines the L-cystine pocket. At 180-202 (LLWVPYIKEQFLLKYPNGVNPVN) the chain is on the lumenal side. A helical membrane pass occupies residues 203–225 (SNDVFFSLHAVVLTLIIIVQCCL). H(+) is bound at residue Asp205. Residues 226-234 (YERGGQRVS) are Cytoplasmic-facing. The helical transmembrane segment at 235 to 257 (WPAIGFLVLAWLFAFVTMIVAAV) threads the bilayer. Topologically, residues 258–263 (GVTTWL) are lumenal. The PQ-loop 2 domain maps to 263–328 (LQFLFCFSYI…QSYNNDQWTL (66 aa)). The chain crosses the membrane as a helical span at residues 264–289 (QFLFCFSYIKLAVTLVKYFPQAYMNF). L-cystine is bound by residues Lys273, Lys280, and Tyr281. Topologically, residues 290–298 (YYKSTEGWS) are cytoplasmic. Residues 299-308 (IGNVLLDFTG) traverse the membrane as a helical segment. Residues Asn301 and Asp305 each contribute to the L-cystine site. Asp305 lines the H(+) pocket. Residues 309–331 (GSFSLLQMFLQSYNNDQWTLIFG) are Lumenal-facing. The chain crosses the membrane as a helical span at residues 332-354 (DPTKFGLGVFSIVFDVVFFIQHF). Asp346 lines the H(+) pocket. Residues 355–367 (CLYRKRPGYDQLN) are Cytoplasmic-facing. Residues 362–366 (GYDQL) carry the Lysosomal targeting motif motif.

This sequence belongs to the cystinosin family. Interacts with components of the V-ATPase complex. Interacts with components of the Ragulator complex. Interacts with RRAGA/RagA and RRAGC/RagC. Interacts with AP-3 complex subunit mu (AP3M1 or AP3M2). In terms of tissue distribution, strongly expressed in pancreas, kidney (adult and fetal), skeletal muscle, melanocytes and keratinocytes. Expressed at lower levels in placenta and heart. Weakly expressed in lung, liver and brain (adult and fetal). Represents 5-20 % of CTNS transcripts, with the exception of the testis that expresses both isoforms in equal proportions.

It localises to the lysosome membrane. It is found in the melanosome membrane. The protein resides in the cell membrane. It carries out the reaction L-cystine(out) + H(+)(out) = L-cystine(in) + H(+)(in). Switches between a lumen- and a cytosol-open conformation: pH induces conformational changes and shifts the equilibrium to facilitate the transition between the lumen- and cytosol-open conformation, thereby promoting cystine transport. Protonation of specific aspartate residues (Asp-205, Asp-305 and Asp-346) favors the cytosol-open conformation. Its function is as follows. Cystine/H(+) symporter that mediates export of cystine, the oxidized dimer of cysteine, from lysosomes. Plays an important role in melanin synthesis by catalyzing cystine export from melanosomes, possibly by inhibiting pheomelanin synthesis. In addition to cystine export, also acts as a positive regulator of mTORC1 signaling in kidney proximal tubular cells, via interactions with components of the v-ATPase and Ragulator complexes. Also involved in small GTPase-regulated vesicle trafficking and lysosomal localization of LAMP2A, independently of cystine transporter activity. The sequence is that of Cystinosin from Homo sapiens (Human).